We begin with the raw amino-acid sequence, 505 residues long: Deoxyguanosinetriphosphate triphosphohydrolase (505 aa).

The 208-residue stretch at 66–273 (RLTHSMEVQQ…MEAADDISYC (208 aa)) folds into the HD domain.

It belongs to the dGTPase family. Type 1 subfamily. Homotetramer. Mg(2+) is required as a cofactor.

It catalyses the reaction dGTP + H2O = 2'-deoxyguanosine + triphosphate + H(+). Functionally, dGTPase preferentially hydrolyzes dGTP over the other canonical NTPs. The sequence is that of Deoxyguanosinetriphosphate triphosphohydrolase from Salmonella choleraesuis (strain SC-B67).